A 64-amino-acid chain; its full sequence is Small ribosomal subunit protein eS17 (64 aa).

The protein belongs to the eukaryotic ribosomal protein eS17 family.

The sequence is that of Small ribosomal subunit protein eS17 from Methanosarcina barkeri (strain Fusaro / DSM 804).